The sequence spans 202 residues: Ribosomal RNA small subunit methyltransferase G (202 aa).

Residues G75, F80, 125-126 (VQ), and R139 contribute to the S-adenosyl-L-methionine site.

This sequence belongs to the methyltransferase superfamily. RNA methyltransferase RsmG family.

The protein resides in the cytoplasm. Functionally, specifically methylates the N7 position of a guanine in 16S rRNA. This is Ribosomal RNA small subunit methyltransferase G from Mesomycoplasma hyopneumoniae (strain J / ATCC 25934 / NCTC 10110) (Mycoplasma hyopneumoniae).